Reading from the N-terminus, the 286-residue chain is NADH-cytochrome b5 reductase 1 (286 aa).

Residues 6-26 (FILVIIGSVALAAGVKYVFTL) form a helical membrane-spanning segment. In terms of domain architecture, FAD-binding FR-type spans 52–155 (QEYRKFQLKE…KGPKGKFNYQ (104 aa)). FAD-binding positions include 135-150 (DNMF…GPKG) and 161-193 (SIGM…EISL).

It belongs to the flavoprotein pyridine nucleotide cytochrome reductase family. As to quaternary structure, monomer. The cofactor is FAD.

Its subcellular location is the endoplasmic reticulum membrane. The protein localises to the mitochondrion outer membrane. The enzyme catalyses 2 Fe(III)-[cytochrome b5] + NADH = 2 Fe(II)-[cytochrome b5] + NAD(+) + H(+). Its function is as follows. Electron donor reductase for cytochrome b5. The cytochrome b5/NADH cytochrome b5 reductase electron transfer system supports the catalytic activity of several sterol biosynthetic enzymes. The polypeptide is NADH-cytochrome b5 reductase 1 (cyb5r1) (Dictyostelium discoideum (Social amoeba)).